Here is a 291-residue protein sequence, read N- to C-terminus: Small ribosomal subunit protein uS2 (291 aa).

Residues 235 to 291 (NLQEDEESGDSGVDPYQDREEEITDYSNYTPKDEASGDDEDEEDNSLVNDEDLYDDK) are disordered. A compositionally biased stretch (acidic residues) spans 270-291 (SGDDEDEEDNSLVNDEDLYDDK).

The protein belongs to the universal ribosomal protein uS2 family.

In Treponema denticola (strain ATCC 35405 / DSM 14222 / CIP 103919 / JCM 8153 / KCTC 15104), this protein is Small ribosomal subunit protein uS2.